A 174-amino-acid chain; its full sequence is Large ribosomal subunit protein uL18 (174 aa).

This sequence belongs to the universal ribosomal protein uL18 family. Part of the 50S ribosomal subunit. Contacts the 5S and 23S rRNAs.

In terms of biological role, this is one of the proteins that bind and probably mediate the attachment of the 5S RNA into the large ribosomal subunit, where it forms part of the central protuberance. This Methanocorpusculum labreanum (strain ATCC 43576 / DSM 4855 / Z) protein is Large ribosomal subunit protein uL18.